A 264-amino-acid chain; its full sequence is Thymidylate synthase (264 aa).

DUMP is bound at residue Arg-21. Residue His-51 coordinates (6R)-5,10-methylene-5,6,7,8-tetrahydrofolate. 126–127 (RR) contacts dUMP. Cys-146 functions as the Nucleophile in the catalytic mechanism. DUMP is bound by residues 166–169 (RSCD), Asn-177, and 207–209 (HLY). Asp-169 contributes to the (6R)-5,10-methylene-5,6,7,8-tetrahydrofolate binding site. Position 263 (Ala-263) interacts with (6R)-5,10-methylene-5,6,7,8-tetrahydrofolate.

Belongs to the thymidylate synthase family. Bacterial-type ThyA subfamily. As to quaternary structure, homodimer.

It is found in the cytoplasm. It catalyses the reaction dUMP + (6R)-5,10-methylene-5,6,7,8-tetrahydrofolate = 7,8-dihydrofolate + dTMP. Its pathway is pyrimidine metabolism; dTTP biosynthesis. Catalyzes the reductive methylation of 2'-deoxyuridine-5'-monophosphate (dUMP) to 2'-deoxythymidine-5'-monophosphate (dTMP) while utilizing 5,10-methylenetetrahydrofolate (mTHF) as the methyl donor and reductant in the reaction, yielding dihydrofolate (DHF) as a by-product. This enzymatic reaction provides an intracellular de novo source of dTMP, an essential precursor for DNA biosynthesis. This chain is Thymidylate synthase, found in Klebsiella pneumoniae subsp. pneumoniae (strain ATCC 700721 / MGH 78578).